Consider the following 151-residue polypeptide: 3-hydroxyacyl-thioester dehydratase Z (151 aa).

Positions 11–131 (AAAAGEKVGQ…TVQATVSTTV (121 aa)) constitute a MaoC-like domain. Substrate-binding positions include 60–63 (IAHG), 86–89 (AINY), 97–99 (PAP), glutamine 124, and arginine 148.

Belongs to the enoyl-CoA hydratase/isomerase family. Homodimer.

The catalysed reaction is a (3R)-3-hydroxyacyl-CoA = a (2E)-enoyl-CoA + H2O. Shows trans-enoyl-CoA hydratase/3-hydroxyacyl-CoA dehydratase activity. The chain is 3-hydroxyacyl-thioester dehydratase Z from Mycobacterium bovis (strain ATCC BAA-935 / AF2122/97).